Consider the following 157-residue polypeptide: Mediator of RNA polymerase II transcription subunit 10 (157 aa).

The protein belongs to the Mediator complex subunit 10 family. Component of the Mediator complex, which is composed of at least 21 subunits that form three structurally distinct submodules. The Mediator head module contains MED6, MED8, MED11, SRB4/MED17, SRB5/MED18, ROX3/MED19, SRB2/MED20 and SRB6/MED22, the middle module contains MED1, MED4, NUT1/MED5, MED7, CSE2/MED9, NUT2/MED10, SRB7/MED21 and SOH1/MED31, and the tail module contains MED2, PGD1/MED3, RGR1/MED14, GAL11/MED15 and SIN4/MED16. The head and the middle modules interact directly with RNA polymerase II, whereas the elongated tail module interacts with gene-specific regulatory proteins. NUT2/MED10 interacts directly with SRB7/MED21.

The protein resides in the nucleus. Component of the Mediator complex, a coactivator involved in the regulated transcription of nearly all RNA polymerase II-dependent genes. Mediator functions as a bridge to convey information from gene-specific regulatory proteins to the basal RNA polymerase II transcription machinery. The Mediator complex, having a compact conformation in its free form, is recruited to promoters by direct interactions with regulatory proteins and serves for the assembly of a functional preinitiation complex with RNA polymerase II and the general transcription factors. The Mediator complex unfolds to an extended conformation and partially surrounds RNA polymerase II, specifically interacting with the unphosphorylated form of the C-terminal domain (CTD) of RNA polymerase II. The Mediator complex dissociates from the RNA polymerase II holoenzyme and stays at the promoter when transcriptional elongation begins. The chain is Mediator of RNA polymerase II transcription subunit 10 (NUT2) from Saccharomyces cerevisiae (strain ATCC 204508 / S288c) (Baker's yeast).